The chain runs to 687 residues: Protein Smaug homolog 2 (687 aa).

Residues 160 to 172 show a composition bias toward basic and acidic residues; that stretch reads TRPEPSYHSRQGS. The tract at residues 160-301 is disordered; the sequence is TRPEPSYHSR…NTFQEDGSGM (142 aa). A Phosphoserine modification is found at serine 172. Composition is skewed to low complexity over residues 175–190 and 200–211; these read WGGP…GPGW and HVPFHPSSSVPP. Residues 215 to 224 are compositionally biased toward polar residues; that stretch reads SIGSNANTGL. Phosphoserine is present on residues serine 271, serine 278, serine 279, and serine 281. The segment covering 278–290 has biased composition (low complexity); that stretch reads SSGSEQTEEQGSS. An SAM domain is found at 299-372; that stretch reads SGMKDVPSWL…LKSLEKDVLE (74 aa). Threonine 400 carries the phosphothreonine modification. Positions 402–464 are disordered; it reads TAKDEGRGEP…APAPVADGDI (63 aa). Residues 424-435 show a composition bias toward basic and acidic residues; that stretch reads GSDKGTEAKDPP. A compositionally biased stretch (low complexity) spans 448–461; that stretch reads PSDSSEPAPAPVAD. 5 positions are modified to phosphoserine: serine 548, serine 550, serine 556, serine 585, and serine 593. Arginine 595 carries the asymmetric dimethylarginine modification. Residues 600–636 form a disordered region; that stretch reads SPSLGGQGRQNLWFANPGGSNSMPSQSRSSVQRTHSL. Residues 617–636 are compositionally biased toward polar residues; it reads GGSNSMPSQSRSSVQRTHSL. At serine 621 the chain carries Phosphoserine.

This sequence belongs to the SMAUG family.

It localises to the cytoplasm. The protein localises to the nucleus. Its function is as follows. Has transcriptional repressor activity. Overexpression inhibits the transcriptional activities of AP-1, p53/TP53 and CDKN1A. The chain is Protein Smaug homolog 2 (Samd4b) from Mus musculus (Mouse).